The primary structure comprises 695 residues: MAP kinase phosphatase with leucine-rich repeats protein 2 (695 aa).

LRR repeat units lie at residues 101 to 122 (SLKS…ITLL), 124 to 145 (NLNH…LSQL), 147 to 167 (SLET…NVCK), 170 to 191 (SLTS…FLNL), 193 to 214 (NLKD…LPNN), 215 to 235 (IEKL…SLIR), 239 to 260 (SLTT…LSCL), 262 to 283 (NVKT…VLGS), 286 to 307 (SLVT…VILL), and 309 to 330 (NLRI…IPTE). Residues 413–426 (SENNEINENNQLLT) are compositionally biased toward low complexity. Disordered stretches follow at residues 413–438 (SENN…KNDS) and 492–519 (QEQL…QQQQ). Residues 556 to 695 (VPDLIIDKLY…LKKFEKDLFK (140 aa)) form the Tyrosine-protein phosphatase domain. Cys-639 serves as the catalytic Phosphocysteine intermediate.

Belongs to the protein-tyrosine phosphatase family. Non-receptor class dual specificity subfamily.

It catalyses the reaction O-phospho-L-tyrosyl-[protein] + H2O = L-tyrosyl-[protein] + phosphate. It carries out the reaction O-phospho-L-seryl-[protein] + H2O = L-seryl-[protein] + phosphate. The enzyme catalyses O-phospho-L-threonyl-[protein] + H2O = L-threonyl-[protein] + phosphate. Probable phosphatase with dual specificity toward Ser/Thr and Tyr-containing proteins. In Dictyostelium discoideum (Social amoeba), this protein is MAP kinase phosphatase with leucine-rich repeats protein 2 (mpl2).